A 634-amino-acid chain; its full sequence is Glutamyl-tRNA(Gln) amidotransferase subunit E (634 aa).

The protein belongs to the GatB/GatE family. GatE subfamily. Heterodimer of GatD and GatE.

It catalyses the reaction L-glutamyl-tRNA(Gln) + L-glutamine + ATP + H2O = L-glutaminyl-tRNA(Gln) + L-glutamate + ADP + phosphate + H(+). In terms of biological role, allows the formation of correctly charged Gln-tRNA(Gln) through the transamidation of misacylated Glu-tRNA(Gln) in organisms which lack glutaminyl-tRNA synthetase. The reaction takes place in the presence of glutamine and ATP through an activated gamma-phospho-Glu-tRNA(Gln). The GatDE system is specific for glutamate and does not act on aspartate. The sequence is that of Glutamyl-tRNA(Gln) amidotransferase subunit E from Sulfolobus acidocaldarius (strain ATCC 33909 / DSM 639 / JCM 8929 / NBRC 15157 / NCIMB 11770).